Consider the following 202-residue polypeptide: Syndecan-2 (202 aa).

An N-terminal signal peptide occupies residues 1-18 (MQRAWILLTLGLMACVSA). Over 19–145 (ETRTELTSDK…HSDNLFKRTE (127 aa)) the chain is Extracellular. Residues Ser41, Ser55, and Ser57 are each glycosylated (O-linked (Xyl...) (glycosaminoglycan) serine). 2 disordered regions span residues 41-63 (SGVY…DEDI) and 88-118 (ETMT…ISEA). Residues 91 to 103 (TLKTQSITPAQTE) show a composition bias toward polar residues. Residues 104–117 (SPEETDKEEVDISE) are compositionally biased toward acidic residues. Ser116 carries the post-translational modification Phosphoserine. A helical transmembrane segment spans residues 146–170 (VLAAVIAGGVIGFLFAIFLILLLVY). Residues 171-202 (RMRKKDEGSYDLGERKPSSAAYQKAPTKEFYA) are Cytoplasmic-facing. Residues 179–202 (SYDLGERKPSSAAYQKAPTKEFYA) are disordered. The residue at position 188 (Ser188) is a Phosphoserine.

Belongs to the syndecan proteoglycan family. In terms of assembly, interacts (via cytoplasmic domain) with SARM1. Forms a complex with SDCBP and PDCD6IP. Post-translationally, O-glycosylated; contains both heparan sulfate and chondroitin sulfate. Phosphorylated on serine residues. In terms of tissue distribution, preferential expression in cells of mesenchymal origin.

The protein localises to the membrane. In terms of biological role, cell surface proteoglycan which regulates dendritic arbor morphogenesis. The chain is Syndecan-2 (Sdc2) from Mus musculus (Mouse).